The sequence spans 118 residues: UPF0295 protein BA_0538/GBAA_0538/BAS0506 (118 aa).

Transmembrane regions (helical) follow at residues Ile12–Phe32 and Phe43–Met63.

It belongs to the UPF0295 family.

It is found in the cell membrane. The sequence is that of UPF0295 protein BA_0538/GBAA_0538/BAS0506 from Bacillus anthracis.